The following is a 98-amino-acid chain: C-X-C motif chemokine 10 (98 aa).

An N-terminal signal peptide occupies residues 1–21; it reads MNQTAILICCLVFLTLSGIQG. Arg26 carries the citrulline modification. 2 disulfides stabilise this stretch: Cys30–Cys57 and Cys32–Cys74.

It belongs to the intercrine alpha (chemokine CxC) family.

It localises to the secreted. Functionally, chemotactic for monocytes and T-lymphocytes. Binds to CXCR3. The polypeptide is C-X-C motif chemokine 10 (CXCL10) (Macaca mulatta (Rhesus macaque)).